A 367-amino-acid polypeptide reads, in one-letter code: sn-glycerol-3-phosphate import ATP-binding protein UgpC (367 aa).

Positions 4 to 235 constitute an ABC transporter domain; it reads LSLRNVQKTY…PASTFVAGFI (232 aa). ATP is bound at residue 37-44; sequence GPSGCGKS.

It belongs to the ABC transporter superfamily. sn-glycerol-3-phosphate importer (TC 3.A.1.1.3) family. In terms of assembly, the complex is composed of two ATP-binding proteins (UgpC), two transmembrane proteins (UgpA and UgpE) and a solute-binding protein (UgpB).

It localises to the cell inner membrane. The enzyme catalyses sn-glycerol 3-phosphate(out) + ATP + H2O = sn-glycerol 3-phosphate(in) + ADP + phosphate + H(+). Part of the ABC transporter complex UgpBAEC involved in sn-glycerol-3-phosphate (G3P) import. Responsible for energy coupling to the transport system. The protein is sn-glycerol-3-phosphate import ATP-binding protein UgpC of Cupriavidus metallidurans (strain ATCC 43123 / DSM 2839 / NBRC 102507 / CH34) (Ralstonia metallidurans).